Reading from the N-terminus, the 297-residue chain is MSNSVPSSVRGKLTPDAPLAPLVWFKSGGTADWLFEPRDVADLQDFLAGLAPEVPVMALGLGSNLIVRDGGVPGVVIRLGKAFAKVAKVDEVTLDCGGGASGILVSSTARDNGIAGLEFLRSIPGTVGGFVRMNGGAYGREVKDVLVDCDVVIRSGEIVTLPLSELGYTYRHSNLTDGSIVVAARFRGHPGNPEAIQAEMDRISAAREASQPLRSKTGGSTFKNPDGGKAWELVDKAGCRGLQIGGAQVSEKHTNFLINTGTATSAEIEGLGEEVRRRVKASSGVDLEWEIKRIGRP.

The 166-residue stretch at 26 to 191 folds into the FAD-binding PCMH-type domain; sequence KSGGTADWLF…VAARFRGHPG (166 aa). Arg-171 is a catalytic residue. Catalysis depends on Ser-220, which acts as the Proton donor. The active site involves Glu-290.

The protein belongs to the MurB family. The cofactor is FAD.

The protein resides in the cytoplasm. The catalysed reaction is UDP-N-acetyl-alpha-D-muramate + NADP(+) = UDP-N-acetyl-3-O-(1-carboxyvinyl)-alpha-D-glucosamine + NADPH + H(+). It functions in the pathway cell wall biogenesis; peptidoglycan biosynthesis. Functionally, cell wall formation. The protein is UDP-N-acetylenolpyruvoylglucosamine reductase of Novosphingobium aromaticivorans (strain ATCC 700278 / DSM 12444 / CCUG 56034 / CIP 105152 / NBRC 16084 / F199).